The following is a 199-amino-acid chain: Recombination protein RecR (199 aa).

Residues 57-72 (CERCNNLSEAPLCAVC) form a C4-type zinc finger. A Toprim domain is found at 80–174 (SILCVVESPA…TISRIARGVP (95 aa)).

Belongs to the RecR family.

May play a role in DNA repair. It seems to be involved in an RecBC-independent recombinational process of DNA repair. It may act with RecF and RecO. This chain is Recombination protein RecR, found in Acidithiobacillus ferrooxidans (strain ATCC 23270 / DSM 14882 / CIP 104768 / NCIMB 8455) (Ferrobacillus ferrooxidans (strain ATCC 23270)).